A 580-amino-acid polypeptide reads, in one-letter code: Mucolipin-1 (580 aa).

Positions 1 to 38 are disordered; sequence MTAPAGPRGSETERLLTPNPGYGTQAGPSPAPPTPPEE. The Cytoplasmic portion of the chain corresponds to 1-65; the sequence is MTAPAGPRGS…FRAKGRKPCK (65 aa). Residue serine 10 is modified to Phosphoserine. The short motif at 11-16 is the Dileucine motif; mediates targeting to lysosomes element; the sequence is ETERLL. The interval 42–62 is interaction with phosphoinositides; that stretch reads RRRLKYFFMSPCDKFRAKGRK. Residues 66-86 form a helical membrane-spanning segment; the sequence is LMLQVVKILVVTVQLILFGLS. Topologically, residues 87–298 are extracellular; that stretch reads NQLAVTFREE…VFQHGDNSFR (212 aa). The extracellular/lumenal pore loop stretch occupies residues 107-121; it reads LGYSDGADDTFAAYT. Cysteine 166 and cysteine 192 are disulfide-bonded. Asparagine 230 carries N-linked (GlcNAc...) asparagine glycosylation. A disulfide bond links cysteine 253 and cysteine 284. A helical transmembrane segment spans residues 299–321; that stretch reads LLFDVVVILTCSLSFLLCARSLL. Over 322-350 the chain is Cytoplasmic; that stretch reads RGFLLQNEFVGFMWRQRGRVISLWERLEF. A helical transmembrane segment spans residues 351-371; sequence VNGWYILLVTSDVLTISGTIM. Residues 372–382 are Extracellular-facing; sequence KIGIEAKNLAS. A helical transmembrane segment spans residues 383-405; that stretch reads YDVCSILLGTSTLLVWVGVIRYL. Topologically, residues 406 to 427 are cytoplasmic; it reads TFFHNYNILIATLRVALPSVMR. Residues 428–448 traverse the membrane as a helical segment; it reads FCCCVAVIYLGYCFCGWIVLG. Topologically, residues 449–456 are extracellular; that stretch reads PYHVKFRS. The segment at residues 457 to 477 is an intramembrane region (pore-forming); it reads LSMVSECLFSLINGDDMFVTF. The short motif at 469–474 is the Selectivity filter element; sequence NGDDMF. At 478 to 491 the chain is on the extracellular side; the sequence is AAMQAQQGRSSLVW. Residues 492–513 form a helical membrane-spanning segment; sequence LFSQLYLYSFISLFIYMVLSLF. Residues 514–580 are Cytoplasmic-facing; the sequence is IALITGAYDT…PSEEHSLLVN (67 aa). 2 positions are modified to phosphoserine; by PAK: serine 557 and serine 559. A required for palmitoylation and association with membranes region spans residues 565–567; sequence CCC. A Dileucine internalization motif; mediates AP2 complex-dependent internalization motif is present at residues 573–578; sequence EEHSLL.

This sequence belongs to the transient receptor (TC 1.A.4) family. Polycystin subfamily. MCOLN1 sub-subfamily. As to quaternary structure, homotetramer. Homooligomer. Can heterooligomerize with MCOLN2 or MCOLN3; heteromeric assemblies have different channel properties as compared to the respective homooligomers and may be tissue-specific. Interacts with PDCD6. Interacts with TMEM163. Interacts with LAPTM4B. In terms of processing, palmitoylated; involved in association with membranes. Post-translationally, phosphorylation by PKA inhibits channel activity. Dephosphorylation increases activity. Proteolytically cleaved probably involving multiple lysosomal proteases including cathepsin B; inhibits lysosomal channel activity. Widely expressed in adult and fetal tissues.

Its subcellular location is the late endosome membrane. It localises to the lysosome membrane. It is found in the cytoplasmic vesicle membrane. The protein resides in the cell projection. The protein localises to the phagocytic cup. Its subcellular location is the cytoplasmic vesicle. It localises to the phagosome membrane. It is found in the cell membrane. It catalyses the reaction Ca(2+)(in) = Ca(2+)(out). The enzyme catalyses Fe(2+)(in) = Fe(2+)(out). The catalysed reaction is Mg(2+)(in) = Mg(2+)(out). It carries out the reaction K(+)(in) = K(+)(out). It catalyses the reaction Na(+)(in) = Na(+)(out). Channel activity is controlled by multiple regulatory mechanisms in different subcellular compartments. Channel function is transiently modulated by changes in Ca(2+) in a pH-dependent manner; pH changes modify the aggregation state of unitary channels; a negative cooperativity between extracellular/lumenal Ca(2+) and H(+) is suggested. Regulated by phosphoinositides in a compartment-specific manner: in lysosomes activated by PtdIns(3,5)P2 (Phosphatidylinositol 3,5-bisphosphate) and at the plasma membrane inhibited by PtdIns(4,5)P2 (Phosphatidylinositol 4,5-bisphosphate). Nonselective cation channel probably playing a role in the regulation of membrane trafficking events and of metal homeostasis. Acts as a Ca(2+)-permeable cation channel with inwardly rectifying activity. Proposed to play a major role in Ca(2+) release from late endosome and lysosome vesicles to the cytoplasm, which is important for many lysosome-dependent cellular events, including the fusion and trafficking of these organelles, exocytosis and autophagy. Required for efficient uptake of large particles in macrophages in which Ca(2+) release from the lysosomes triggers lysosomal exocytosis. May also play a role in phagosome-lysosome fusion. Involved in lactosylceramide trafficking indicative for a role in the regulation of late endocytic membrane fusion/fission events. By mediating lysosomal Ca(2+) release is involved in regulation of mTORC1 signaling and in mTOR/TFEB-dependent lysosomal adaptation to environmental cues such as nutrient levels. Seems to act as lysosomal active oxygen species (ROS) sensor involved in ROS-induced TFEB activation and autophagy. Also functions as a Fe(2+) permeable channel in late endosomes and lysosomes. Also permeable to Mg(2+), Na(+). K(+) and Cs(+). Proposed to play a role in zinc homeostasis probably implicating its association with TMEM163 In adaptive immunity, TRPML2 and TRPML1 may play redundant roles in the function of the specialized lysosomes of B cells. In terms of biological role, may contribute to cellular lipase activity within the late endosomal pathway or at the cell surface which may be involved in processes of membrane reshaping and vesiculation, especially the growth of tubular structures. However, it is not known, whether it conveys the enzymatic activity directly, or merely facilitates the activity of an associated phospholipase. The protein is Mucolipin-1 of Homo sapiens (Human).